Here is a 188-residue protein sequence, read N- to C-terminus: Phosphoribosylglycinamide formyltransferase (188 aa).

12-14 contributes to the N(1)-(5-phospho-beta-D-ribosyl)glycinamide binding site; the sequence is GSN. (6R)-10-formyltetrahydrofolate is bound by residues lysine 66, 91–94, and asparagine 108; that span reads MRLI. Histidine 110 (proton donor) is an active-site residue.

The protein belongs to the GART family.

The enzyme catalyses N(1)-(5-phospho-beta-D-ribosyl)glycinamide + (6R)-10-formyltetrahydrofolate = N(2)-formyl-N(1)-(5-phospho-beta-D-ribosyl)glycinamide + (6S)-5,6,7,8-tetrahydrofolate + H(+). It functions in the pathway purine metabolism; IMP biosynthesis via de novo pathway; N(2)-formyl-N(1)-(5-phospho-D-ribosyl)glycinamide from N(1)-(5-phospho-D-ribosyl)glycinamide (10-formyl THF route): step 1/1. In terms of biological role, catalyzes the transfer of a formyl group from 10-formyltetrahydrofolate to 5-phospho-ribosyl-glycinamide (GAR), producing 5-phospho-ribosyl-N-formylglycinamide (FGAR) and tetrahydrofolate. The protein is Phosphoribosylglycinamide formyltransferase of Staphylococcus aureus (strain MSSA476).